Here is a 271-residue protein sequence, read N- to C-terminus: Cyclase-like protein 3 (271 aa).

The first 21 residues, 1-21 (MYHLLIIITTLSFSSINITFA), serve as a signal peptide directing secretion.

The protein belongs to the Cyclase 1 superfamily.

It localises to the secreted. It is found in the extracellular space. The protein localises to the extracellular matrix. This chain is Cyclase-like protein 3, found in Arabidopsis thaliana (Mouse-ear cress).